The primary structure comprises 285 residues: Malectin (285 aa).

Residues methionine 1–alanine 26 form the signal peptide. Residues glutamate 27–serine 262 lie on the Lumenal side of the membrane. A carbohydrate is bound by residues tyrosine 71, tyrosine 93, tyrosine 120, phenylalanine 121, and aspartate 190. The interval lysine 209–alanine 258 is disordered. The segment covering glutamate 220–proline 232 has biased composition (acidic residues). The N-linked (GlcNAc...) asparagine glycan is linked to asparagine 261. The helical transmembrane segment at serine 263–cysteine 283 threads the bilayer. The Cytoplasmic segment spans residues arginine 284–leucine 285.

The protein belongs to the malectin family.

Its subcellular location is the endoplasmic reticulum membrane. In terms of biological role, carbohydrate-binding protein with a strong ligand preference for Glc2-N-glycan. May play a role in the early steps of protein N-glycosylation. In Danio rerio (Zebrafish), this protein is Malectin.